We begin with the raw amino-acid sequence, 174 residues long: Small ribosomal subunit protein uS12m (174 aa).

It belongs to the universal ribosomal protein uS12 family. As to quaternary structure, component of the mitochondrial small ribosomal subunit (mt-SSU). Mature N.crassa 74S mitochondrial ribosomes consist of a small (37S) and a large (54S) subunit. The 37S small subunit contains a 16S ribosomal RNA (16S mt-rRNA) and 32 different proteins. The 54S large subunit contains a 23S rRNA (23S mt-rRNA) and 42 different proteins. uS12m forms part of the decoding center of the mt-SSU.

It is found in the mitochondrion. In terms of biological role, component of the mitochondrial ribosome (mitoribosome), a dedicated translation machinery responsible for the synthesis of mitochondrial genome-encoded proteins, including at least some of the essential transmembrane subunits of the mitochondrial respiratory chain. The mitoribosomes are attached to the mitochondrial inner membrane and translation products are cotranslationally integrated into the membrane. In Neurospora crassa (strain ATCC 24698 / 74-OR23-1A / CBS 708.71 / DSM 1257 / FGSC 987), this protein is Small ribosomal subunit protein uS12m (mrps12).